Here is a 197-residue protein sequence, read N- to C-terminus: Probable GTP-binding protein EngB (197 aa).

In terms of domain architecture, EngB-type G spans 22–197 (TGVEVAFAGR…FKEKLDTWYQ (176 aa)). Residues 30–37 (GRSNAGKS), 57–61 (GRTQL), 75–78 (DLPG), 142–145 (TKAD), and 177–179 (FSS) each bind GTP. Residues S37 and T59 each coordinate Mg(2+).

This sequence belongs to the TRAFAC class TrmE-Era-EngA-EngB-Septin-like GTPase superfamily. EngB GTPase family. It depends on Mg(2+) as a cofactor.

Its function is as follows. Necessary for normal cell division and for the maintenance of normal septation. The chain is Probable GTP-binding protein EngB from Francisella tularensis subsp. tularensis (strain FSC 198).